A 339-amino-acid chain; its full sequence is Geranylgeranyl pyrophosphate synthase AN1592 (339 aa).

The isopentenyl diphosphate site is built by Lys41, Arg44, and His73. Residues Asp80 and Asp84 each contribute to the Mg(2+) site. Residue Arg89 participates in dimethylallyl diphosphate binding. Position 90 (Arg90) interacts with isopentenyl diphosphate. Dimethylallyl diphosphate is bound by residues Lys192, Thr193, and Gln228. Position 231 (Asp231) interacts with Mg(2+). Dimethylallyl diphosphate is bound by residues Asn235, Lys245, and Lys255.

This sequence belongs to the FPP/GGPP synthase family. It depends on Mg(2+) as a cofactor.

The catalysed reaction is isopentenyl diphosphate + dimethylallyl diphosphate = (2E)-geranyl diphosphate + diphosphate. It catalyses the reaction isopentenyl diphosphate + (2E)-geranyl diphosphate = (2E,6E)-farnesyl diphosphate + diphosphate. It carries out the reaction isopentenyl diphosphate + (2E,6E)-farnesyl diphosphate = (2E,6E,10E)-geranylgeranyl diphosphate + diphosphate. The protein operates within secondary metabolite biosynthesis. Geranylgeranyl pyrophosphate synthase; part of the gene cluster that mediates the biosynthesis of erinacines, cyathane-xylosides that show unique biological activities, including leishmanicidal activity, stimulating activity for nerve growth-factor synthesis, and agonistic activity toward the kappa opioid receptor. The geranylgeranyl diphosphate (GGPP) synthase eriE catalyzes the first step in erinacines biosynthesis via conversion of farnesyl pyrophosphate and isopentyl pyrophosphate into geranylgeranyl pyrophosphate (GGPP). GGPP is then substrate of the diterpene cyclase eriG for the production of cyatha-3,12-diene. The cytochrome P450 monooxygenase eriI then hydroxylates cyatha-3,12-diene at C-14 of the seven-membered ring to produce erinacol, which is further hydroxylated at C-15 by the cytochrome P450 monooxygenase eriC to yield cyathadiol. The cytochrome P450 monooxygenase eriA then catalyzes C-11 hydroxylation in the presence of the short chain dehydrogenase/reductase (SDR) eriH, which leads to the production of cyathatriol. The acetyltransferase eriL converts cyathatriol into 11-O-acetyl-cyathatriol. The SDR eriH catalyzes further oxidation of 11-O-acetyl-cyathatriol into 1-O-acetylcyathin A3. Finally, the glycosyl transferase eriJ tranfers xylose from UDP-xylose onto C-14 of 11-O-acetyl-cyathatriol to form eracine Q. EriJ is also able to convert 11-O-acetyl-cyathatriol to eracine Q2 by using UDP-D-glucose as cosubstrate, but at a lower rate. In the absence of eriL and eriJ, the SDR eriH is able to convert cyathatriol to cyathin A3; this is likely a switching mechanism in the biosynthesis of cyathins (C-14 ketogroup)and erinacines (C-14 glycosylated group). The roles of the SDR eriB, the polyprenyl transferase eriF and the dehydrogenase eriK have still to be identified. The chain is Geranylgeranyl pyrophosphate synthase AN1592 from Hericium erinaceus (Lion's mane mushroom).